The following is a 214-amino-acid chain: Riboflavin kinase (214 aa).

An H-T-H motif-like region spans residues 1–91 (MRSIMEVETL…YCSIFEDGGA (91 aa)). The tract at residues 92-214 (PVMRGKVVTG…DGDEVEVTLE (123 aa)) is riboflavin kinase. 101-106 (GLGEGQ) is a CDP binding site. Mg(2+)-binding residues include Thr-130 and Asn-132. The FMN site is built by Thr-182 and Glu-190. 195-198 (IKLR) is a CDP binding site.

The protein belongs to the archaeal riboflavin kinase family. Mg(2+) is required as a cofactor.

The enzyme catalyses riboflavin + CTP = CDP + FMN + H(+). The protein operates within cofactor biosynthesis; FMN biosynthesis; FMN from riboflavin (CTP route): step 1/1. Its function is as follows. Catalyzes the CTP-dependent phosphorylation of riboflavin (vitamin B2) to form flavin mononucleotide (FMN). This is Riboflavin kinase (ribK) from Methanocella arvoryzae (strain DSM 22066 / NBRC 105507 / MRE50).